We begin with the raw amino-acid sequence, 222 residues long: Glycerol-3-phosphate acyltransferase (222 aa).

The next 6 membrane-spanning stretches (helical) occupy residues 4–24 (ALLL…IPTG), 56–76 (PAAI…VALV), 87–107 (ALPA…VVLG), 130–150 (FMLN…VIFF), 153–173 (IVSL…LALQ), and 174–191 (LPPP…YVIV).

Belongs to the PlsY family. As to quaternary structure, probably interacts with PlsX.

The protein localises to the cell inner membrane. It carries out the reaction an acyl phosphate + sn-glycerol 3-phosphate = a 1-acyl-sn-glycero-3-phosphate + phosphate. Its pathway is lipid metabolism; phospholipid metabolism. Catalyzes the transfer of an acyl group from acyl-phosphate (acyl-PO(4)) to glycerol-3-phosphate (G3P) to form lysophosphatidic acid (LPA). This enzyme utilizes acyl-phosphate as fatty acyl donor, but not acyl-CoA or acyl-ACP. The polypeptide is Glycerol-3-phosphate acyltransferase (Synechocystis sp. (strain ATCC 27184 / PCC 6803 / Kazusa)).